The primary structure comprises 745 residues: MAANKDEFSVKQISPKLGGERGARNPYGPTSLHDLVEQMEFLYVDVIRAIKNSDVDPGPCDPVVEITLGNYKSSTKDLPVGPNMDWNQVFAFDKTKGDVLSVTLKDRLTNTVINKSNFKLASEIPTRAPPDARIAPQRYPLRNTKTGFYLMMSVWFGTQVDEVYPVAWFSDASEVSTCVINTRPKVYLAPRLCYVRVTIVSGHDLISTDRNRTPSVYVTATLGQVTLKTEVSSGTNPSWNKDLIFVASEPLEGTVYIRLIDRVDDQHEERIIGKLEKKLSEMTPLKVPSSAPALFYDIEVEPAGDSRRFASRLKMKLATDQAYHVAEESIQYSSDYRPFVKGLWPCLLGKLEIGILGATGLKGSDERKQGIDSYVVAKYGNKWARTRTVVNSVTPKWNEQYSWDDYEKCTVLTLGIYDNRQIFKEDQANDVPIGKVRISLNRVESDWIYACSYPILKLGSSGLKKMGELQLAVRFVYVAQGYARYSAPFRWLLPKAHYKSPLSVYQIEEMRAEAVKINCANLARTEPALRNEVVWDMLKPKTNTRYSTCDMRKVAALAFFDLFLYWPSLIVWLAIYLVVVPCIVLVGLSGLHKFLTRKFWNKRENPRSPLIVNDLKLWKLESPNLDELEEEFDSFPSSVSDVNILRMRYDRIRMVCQRPMILLGDAASQGERLYALLTFNGDDQLASFYCWLICVLVALCWYNIPMWLWSLYPIAYWLNFTPLRNDMPCGVSNFFRRLPTNEVLF.

The interval Met-1 to Thr-30 is disordered. 3 consecutive C2 domains span residues Arg-21–Tyr-139, Asp-171–Ala-293, and Ala-326–Tyr-453. Residues Asp-56, Asp-61, Asp-106, and Asn-110 each coordinate Ca(2+). A run of 2 helical transmembrane segments spans residues Ser-568–Leu-588 and Phe-688–Leu-708.

This sequence belongs to the MCTP family. Ca(2+) is required as a cofactor. In terms of tissue distribution, expressed in incipient leaf primordia.

The protein localises to the cell membrane. The protein resides in the cytoplasm. Functionally, may function as a signaling molecule by regulating the trafficking of other regulators. The sequence is that of Multiple C2 domain and transmembrane region protein 13 from Arabidopsis thaliana (Mouse-ear cress).